Here is a 116-residue protein sequence, read N- to C-terminus: Aspartate 1-decarboxylase (116 aa).

The Schiff-base intermediate with substrate; via pyruvic acid role is filled by Ser25. Ser25 carries the pyruvic acid (Ser) modification. Residue Thr57 participates in substrate binding. Tyr58 acts as the Proton donor in catalysis. A substrate-binding site is contributed by 73–75 (GAA).

The protein belongs to the PanD family. In terms of assembly, heterooctamer of four alpha and four beta subunits. Pyruvate serves as cofactor. Is synthesized initially as an inactive proenzyme, which is activated by self-cleavage at a specific serine bond to produce a beta-subunit with a hydroxyl group at its C-terminus and an alpha-subunit with a pyruvoyl group at its N-terminus.

It is found in the cytoplasm. The enzyme catalyses L-aspartate + H(+) = beta-alanine + CO2. It participates in cofactor biosynthesis; (R)-pantothenate biosynthesis; beta-alanine from L-aspartate: step 1/1. Its function is as follows. Catalyzes the pyruvoyl-dependent decarboxylation of aspartate to produce beta-alanine. In Phocaeicola vulgatus (strain ATCC 8482 / DSM 1447 / JCM 5826 / CCUG 4940 / NBRC 14291 / NCTC 11154) (Bacteroides vulgatus), this protein is Aspartate 1-decarboxylase.